A 266-amino-acid polypeptide reads, in one-letter code: HLA class II histocompatibility antigen, DR beta 4 chain (266 aa).

The first 29 residues, 1–29 (MVCLKLPGGSCMAALTVTLTVLSSPLALA), serve as a signal peptide directing secretion. Residues 30 to 124 (GDTQPRFLEQ…VESFTVQRRV (95 aa)) are beta-1. Residues 30 to 227 (GDTQPRFLEQ…SARSESAQSK (198 aa)) are Extracellular-facing. 2 disulfides stabilise this stretch: C44-C108 and C146-C202. A glycan (N-linked (GlcNAc...) asparagine) is linked at N48. Residues 125-227 (QPKVTVYPSK…SARSESAQSK (103 aa)) form a beta-2 region. Residues 126–216 (PKVTVYPSKT…PSMMSPLTVQ (91 aa)) enclose the Ig-like C1-type domain. A helical transmembrane segment spans residues 228–250 (MLSGVGGFVLGLLFLGTGLFIYF). At 251 to 266 (RNQKGHSGLQPTGLLS) the chain is on the cytoplasmic side. A Glycyl lysine isopeptide (Lys-Gly) (interchain with G-Cter in ubiquitin) cross-link involves residue K254.

This sequence belongs to the MHC class II family. As to quaternary structure, heterodimer of an alpha and a beta subunit; also referred as MHC class II molecule. In the endoplasmic reticulum (ER) it forms a heterononamer; 3 MHC class II molecules bind to a CD74 homotrimer (also known as invariant chain or HLA class II histocompatibility antigen gamma chain). In the endosomal/lysosomal system; CD74 undergoes sequential degradation by various proteases; leaving a small fragment termed CLIP on each MHC class II molecule. MHC class II molecule interacts with HLA_DM, and HLA_DO in B-cells, in order to release CLIP and facilitate the binding of antigenic peptides. Post-translationally, ubiquitinated by MARCH1 and MARCH8 at Lys-254 leading to sorting into the endosome system and down-regulation of MHC class II. When associated with ubiquitination of the alpha subunit of HLA-DR: HLA-DRA 'Lys-244', the down-regulation of MHC class II may be highly effective.

The protein resides in the cell membrane. The protein localises to the endoplasmic reticulum membrane. It is found in the golgi apparatus. It localises to the trans-Golgi network membrane. Its subcellular location is the endosome membrane. The protein resides in the lysosome membrane. The protein localises to the late endosome membrane. Binds peptides derived from antigens that access the endocytic route of antigen presenting cells (APC) and presents them on the cell surface for recognition by the CD4 T-cells. The peptide binding cleft accommodates peptides of 10-30 residues. The peptides presented by MHC class II molecules are generated mostly by degradation of proteins that access the endocytic route, where they are processed by lysosomal proteases and other hydrolases. Exogenous antigens that have been endocytosed by the APC are thus readily available for presentation via MHC II molecules, and for this reason this antigen presentation pathway is usually referred to as exogenous. As membrane proteins on their way to degradation in lysosomes as part of their normal turn-over are also contained in the endosomal/lysosomal compartments, exogenous antigens must compete with those derived from endogenous components. Autophagy is also a source of endogenous peptides, autophagosomes constitutively fuse with MHC class II loading compartments. In addition to APCs, other cells of the gastrointestinal tract, such as epithelial cells, express MHC class II molecules and CD74 and act as APCs, which is an unusual trait of the GI tract. To produce a MHC class II molecule that presents an antigen, three MHC class II molecules (heterodimers of an alpha and a beta chain) associate with a CD74 trimer in the ER to form a heterononamer. Soon after the entry of this complex into the endosomal/lysosomal system where antigen processing occurs, CD74 undergoes a sequential degradation by various proteases, including CTSS and CTSL, leaving a small fragment termed CLIP (class-II-associated invariant chain peptide). The removal of CLIP is facilitated by HLA-DM via direct binding to the alpha-beta-CLIP complex so that CLIP is released. HLA-DM stabilizes MHC class II molecules until primary high affinity antigenic peptides are bound. The MHC II molecule bound to a peptide is then transported to the cell membrane surface. In B-cells, the interaction between HLA-DM and MHC class II molecules is regulated by HLA-DO. Primary dendritic cells (DCs) also to express HLA-DO. Lysosomal microenvironment has been implicated in the regulation of antigen loading into MHC II molecules, increased acidification produces increased proteolysis and efficient peptide loading. The sequence is that of HLA class II histocompatibility antigen, DR beta 4 chain (HLA-DRB4) from Homo sapiens (Human).